Reading from the N-terminus, the 334-residue chain is Formamidase (334 aa).

Residues 14 to 260 (FLVAAIQFPV…WEIVTGEIYP (247 aa)) enclose the CN hydrolase domain. The active-site Proton acceptor is E60. K133 functions as the Proton donor in the catalytic mechanism. C166 functions as the Nucleophile in the catalytic mechanism.

This sequence belongs to the carbon-nitrogen hydrolase superfamily. Aliphatic amidase family.

The catalysed reaction is formamide + H2O = formate + NH4(+). Functionally, is an aliphatic amidase with a restricted substrate specificity, as it only hydrolyzes formamide. In Helicobacter pylori (strain J99 / ATCC 700824) (Campylobacter pylori J99), this protein is Formamidase.